The following is a 382-amino-acid chain: D-galactonate dehydratase (382 aa).

Asp-183 lines the Mg(2+) pocket. Residue His-185 is the Proton donor of the active site. Positions 209 and 235 each coordinate Mg(2+). His-285 (proton acceptor) is an active-site residue.

It belongs to the mandelate racemase/muconate lactonizing enzyme family. GalD subfamily. Mg(2+) serves as cofactor.

The catalysed reaction is D-galactonate = 2-dehydro-3-deoxy-D-galactonate + H2O. It functions in the pathway carbohydrate acid metabolism; D-galactonate degradation; D-glyceraldehyde 3-phosphate and pyruvate from D-galactonate: step 1/3. In terms of biological role, catalyzes the dehydration of D-galactonate to 2-keto-3-deoxy-D-galactonate. This Escherichia coli O45:K1 (strain S88 / ExPEC) protein is D-galactonate dehydratase.